The sequence spans 488 residues: GTPase Der (488 aa).

2 consecutive EngA-type G domains span residues 3–166 and 199–372; these read PVVA…AEAM and IKLA…DSAT. Residues 9–16, 56–60, 118–121, 205–212, 252–256, and 317–320 contribute to the GTP site; these read GRPNVGKS, DTGGI, NKVD, GKPNVGKS, DTAGV, and NKWD. The KH-like domain occupies 373-457; sequence RRVSTSMLTR…PIQLRFQEGD (85 aa). The disordered stretch occupies residues 460–488; that stretch reads FENKTEKLTMSQERRRKRAQSHIKDRKTK. Residues 473-488 show a composition bias toward basic residues; it reads RRRKRAQSHIKDRKTK.

The protein belongs to the TRAFAC class TrmE-Era-EngA-EngB-Septin-like GTPase superfamily. EngA (Der) GTPase family. Associates with the 50S ribosomal subunit.

Its function is as follows. GTPase that plays an essential role in the late steps of ribosome biogenesis. This chain is GTPase Der, found in Shewanella baltica (strain OS155 / ATCC BAA-1091).